The chain runs to 249 residues: Triosephosphate isomerase (249 aa).

9–11 contributes to the substrate binding site; sequence NWK. The active-site Electrophile is H95. Residue E167 is the Proton acceptor of the active site. Residues G173, S213, and 234-235 each bind substrate; that span reads GG.

It belongs to the triosephosphate isomerase family. Homodimer.

Its subcellular location is the cytoplasm. It catalyses the reaction D-glyceraldehyde 3-phosphate = dihydroxyacetone phosphate. The protein operates within carbohydrate biosynthesis; gluconeogenesis. It functions in the pathway carbohydrate degradation; glycolysis; D-glyceraldehyde 3-phosphate from glycerone phosphate: step 1/1. Involved in the gluconeogenesis. Catalyzes stereospecifically the conversion of dihydroxyacetone phosphate (DHAP) to D-glyceraldehyde-3-phosphate (G3P). This is Triosephosphate isomerase from Solibacter usitatus (strain Ellin6076).